A 154-amino-acid chain; its full sequence is Lipoprotein signal peptidase (154 aa).

The next 2 helical transmembrane spans lie at 55-75 (GHMW…IYIM) and 84-104 (LFSI…IDRI). Catalysis depends on residues D111 and D129. The helical transmembrane segment at 124–144 (IFNVADAALSVGVVLMLVYVF) threads the bilayer.

It belongs to the peptidase A8 family.

The protein localises to the cell membrane. The catalysed reaction is Release of signal peptides from bacterial membrane prolipoproteins. Hydrolyzes -Xaa-Yaa-Zaa-|-(S,diacylglyceryl)Cys-, in which Xaa is hydrophobic (preferably Leu), and Yaa (Ala or Ser) and Zaa (Gly or Ala) have small, neutral side chains.. It participates in protein modification; lipoprotein biosynthesis (signal peptide cleavage). In terms of biological role, this protein specifically catalyzes the removal of signal peptides from prolipoproteins. The protein is Lipoprotein signal peptidase of Listeria innocua serovar 6a (strain ATCC BAA-680 / CLIP 11262).